Reading from the N-terminus, the 198-residue chain is Adenylate kinase (198 aa).

Residue 10 to 15 participates in ATP binding; that stretch reads GAGKGT. The NMP stretch occupies residues 30 to 59; sequence STGDMLRAAVQAGSEVGKRAKAVMDAGELV. AMP is bound by residues Thr31, Arg36, 57 to 59, 85 to 88, and Gln92; these read ELV and GYPR. Residues 126 to 142 form an LID region; the sequence is KRAEDAKAAGQPVRKDD. Arg127 provides a ligand contact to ATP. AMP contacts are provided by Arg139 and Arg150. Ala178 serves as a coordination point for ATP.

Belongs to the adenylate kinase family. In terms of assembly, monomer.

It localises to the cytoplasm. The enzyme catalyses AMP + ATP = 2 ADP. Its pathway is purine metabolism; AMP biosynthesis via salvage pathway; AMP from ADP: step 1/1. Its function is as follows. Catalyzes the reversible transfer of the terminal phosphate group between ATP and AMP. Plays an important role in cellular energy homeostasis and in adenine nucleotide metabolism. In Mesorhizobium japonicum (strain LMG 29417 / CECT 9101 / MAFF 303099) (Mesorhizobium loti (strain MAFF 303099)), this protein is Adenylate kinase.